A 116-amino-acid polypeptide reads, in one-letter code: Large ribosomal subunit protein bL20 (116 aa).

The protein belongs to the bacterial ribosomal protein bL20 family.

In terms of biological role, binds directly to 23S ribosomal RNA and is necessary for the in vitro assembly process of the 50S ribosomal subunit. It is not involved in the protein synthesizing functions of that subunit. This is Large ribosomal subunit protein bL20 from Bacteroides thetaiotaomicron (strain ATCC 29148 / DSM 2079 / JCM 5827 / CCUG 10774 / NCTC 10582 / VPI-5482 / E50).